The chain runs to 420 residues: 3-isopropylmalate dehydratase large subunit (420 aa).

[4Fe-4S] cluster is bound by residues cysteine 300, cysteine 360, and cysteine 363.

Belongs to the aconitase/IPM isomerase family. LeuC type 2 subfamily. Heterodimer of LeuC and LeuD. [4Fe-4S] cluster serves as cofactor.

It carries out the reaction (2R,3S)-3-isopropylmalate = (2S)-2-isopropylmalate. Its pathway is amino-acid biosynthesis; L-leucine biosynthesis; L-leucine from 3-methyl-2-oxobutanoate: step 2/4. Catalyzes the isomerization between 2-isopropylmalate and 3-isopropylmalate, via the formation of 2-isopropylmaleate. This is 3-isopropylmalate dehydratase large subunit from Heliobacterium modesticaldum (strain ATCC 51547 / Ice1).